Here is a 463-residue protein sequence, read N- to C-terminus: uncharacterized protein (463 aa).

This sequence belongs to the UbiD family.

This is an uncharacterized protein from Rhodospirillum rubrum.